A 243-amino-acid chain; its full sequence is 23S rRNA (guanosine-2'-O-)-methyltransferase RlmB (243 aa).

3 residues coordinate S-adenosyl-L-methionine: G196, I216, and L225.

Belongs to the class IV-like SAM-binding methyltransferase superfamily. RNA methyltransferase TrmH family. RlmB subfamily. Homodimer.

It localises to the cytoplasm. It carries out the reaction guanosine(2251) in 23S rRNA + S-adenosyl-L-methionine = 2'-O-methylguanosine(2251) in 23S rRNA + S-adenosyl-L-homocysteine + H(+). Functionally, specifically methylates the ribose of guanosine 2251 in 23S rRNA. The sequence is that of 23S rRNA (guanosine-2'-O-)-methyltransferase RlmB from Salmonella typhimurium (strain LT2 / SGSC1412 / ATCC 700720).